We begin with the raw amino-acid sequence, 394 residues long: Phosphoglycerate kinase (394 aa).

Residues 21–23 (DFN), arginine 36, 59–62 (HLGR), arginine 118, and arginine 151 each bind substrate. Serine 183 carries the post-translational modification Phosphoserine. Position 201 (lysine 201) interacts with ATP. Threonine 299 is modified (phosphothreonine). ATP contacts are provided by residues glutamate 323 and 350 to 353 (GGDS).

It belongs to the phosphoglycerate kinase family. In terms of assembly, monomer.

It localises to the cytoplasm. It carries out the reaction (2R)-3-phosphoglycerate + ATP = (2R)-3-phospho-glyceroyl phosphate + ADP. It functions in the pathway carbohydrate degradation; glycolysis; pyruvate from D-glyceraldehyde 3-phosphate: step 2/5. This is Phosphoglycerate kinase (pgk) from Bacillus subtilis (strain 168).